A 214-amino-acid chain; its full sequence is Ribosomal RNA small subunit methyltransferase G (214 aa).

Residues glycine 81, methionine 86, 132–133 (VE), and arginine 147 contribute to the S-adenosyl-L-methionine site.

The protein belongs to the methyltransferase superfamily. RNA methyltransferase RsmG family.

The protein localises to the cytoplasm. It catalyses the reaction guanosine(527) in 16S rRNA + S-adenosyl-L-methionine = N(7)-methylguanosine(527) in 16S rRNA + S-adenosyl-L-homocysteine. Specifically methylates the N7 position of guanine in position 527 of 16S rRNA. This chain is Ribosomal RNA small subunit methyltransferase G, found in Pseudomonas aeruginosa (strain LESB58).